Consider the following 139-residue polypeptide: uncharacterized protein (139 aa).

The disordered stretch occupies residues 83–109 (LIPPKKTSPATSSSLKPPRRPRGCLNG). Over residues 86–98 (PKKTSPATSSSLK) the composition is skewed to low complexity.

It to M.pneumoniae MPN_091 and MPN_463.

This is an uncharacterized protein from Mycoplasma pneumoniae (strain ATCC 29342 / M129 / Subtype 1) (Mycoplasmoides pneumoniae).